The primary structure comprises 67 residues: Protein AaeX (67 aa).

A run of 2 helical transmembrane segments spans residues 3-23 (VLPVVVVFGMSFPPIFIEIIV) and 43-63 (LVWHPALFNTALYCCLFYVVS).

This sequence belongs to the AaeX family.

The protein resides in the cell membrane. In Erwinia tasmaniensis (strain DSM 17950 / CFBP 7177 / CIP 109463 / NCPPB 4357 / Et1/99), this protein is Protein AaeX.